The chain runs to 23 residues: Coenzyme PQQ synthesis protein A (23 aa).

The segment at residues 15–19 (EVTLY) is a cross-link (pyrroloquinoline quinone (Glu-Tyr)).

Belongs to the PqqA family.

Its pathway is cofactor biosynthesis; pyrroloquinoline quinone biosynthesis. Functionally, required for coenzyme pyrroloquinoline quinone (PQQ) biosynthesis. PQQ is probably formed by cross-linking a specific glutamate to a specific tyrosine residue and excising these residues from the peptide. This chain is Coenzyme PQQ synthesis protein A, found in Pseudomonas aeruginosa (strain UCBPP-PA14).